The following is a 565-amino-acid chain: Oxygen-dependent choline dehydrogenase (565 aa).

Position 7–36 (7–36) interacts with FAD; that stretch reads DYIICGAGSAGNVLATRLTEDPDVTVLLLE. His474 serves as the catalytic Proton acceptor.

The protein belongs to the GMC oxidoreductase family. It depends on FAD as a cofactor.

The catalysed reaction is choline + A = betaine aldehyde + AH2. It carries out the reaction betaine aldehyde + NAD(+) + H2O = glycine betaine + NADH + 2 H(+). It functions in the pathway amine and polyamine biosynthesis; betaine biosynthesis via choline pathway; betaine aldehyde from choline (cytochrome c reductase route): step 1/1. Its function is as follows. Involved in the biosynthesis of the osmoprotectant glycine betaine. Catalyzes the oxidation of choline to betaine aldehyde and betaine aldehyde to glycine betaine at the same rate. This chain is Oxygen-dependent choline dehydrogenase, found in Burkholderia thailandensis (strain ATCC 700388 / DSM 13276 / CCUG 48851 / CIP 106301 / E264).